The sequence spans 108 residues: ATP-dependent Clp protease adapter protein ClpS (108 aa).

A compositionally biased stretch (basic and acidic residues) spans 1 to 10; it reads MADSDKHGDE. The interval 1 to 21 is disordered; that stretch reads MADSDKHGDEGPSTGVVVKAK.

Belongs to the ClpS family. In terms of assembly, binds to the N-terminal domain of the chaperone ClpA.

Involved in the modulation of the specificity of the ClpAP-mediated ATP-dependent protein degradation. The protein is ATP-dependent Clp protease adapter protein ClpS of Rhodospirillum centenum (strain ATCC 51521 / SW).